The chain runs to 126 residues: YGGLGYGGLGGGCGRGFSGGGLPVATASAAPTGLGIASENRYEGTVGVSGNLPFLGTADVAGEFPTAGIGEIDYGCGNGAVGITREGGFGYGAGYGDGYGLGFGGYGGGYGLGYGGYGGCGCSWGY.

A left arm region spans residues 1–17; it reads YGGLGYGGLGGGCGRGF. Residues 18–86 form a central domain region; the sequence is SGGGLPVATA…GNGAVGITRE (69 aa). Positions 87 to 126 are right arm (Gly-rich tandem repeats); sequence GGFGYGAGYGDGYGLGFGGYGGGYGLGYGGYGGCGCSWGY.

It belongs to the chorion protein family.

In terms of biological role, this protein is one of many from the eggshell of the silk moth. The polypeptide is Chorion class B protein M1768 (Bombyx mori (Silk moth)).